Reading from the N-terminus, the 763-residue chain is Fibroblast growth factor receptor (763 aa).

An N-terminal signal peptide occupies residues 1-27 (MKEFEVKVASTAFVLVLFSLTINQILA). Residues 28–291 (SETSTKFRSP…ITKGIPNETN (264 aa)) lie on the Extracellular side of the membrane. The segment at 34–74 (FRSPVPAPTVPDWNHLPNEGNEENVVSAPKQDGASGGQKPY) is disordered. 2 Ig-like C2-type domains span residues 73 to 164 (PYWT…YQLD) and 173 to 270 (PILA…AWLS). A disulfide bridge links cysteine 98 with cysteine 148. 6 N-linked (GlcNAc...) asparagine glycosylation sites follow: asparagine 158, asparagine 182, asparagine 220, asparagine 230, asparagine 243, and asparagine 288. An intrachain disulfide couples cysteine 195 to cysteine 254. A helical transmembrane segment spans residues 292–312 (IIIYVMCGVLVILFGLAVVLV). The Cytoplasmic portion of the chain corresponds to 313–763 (LYYHCYNGKD…NEHARLRSEA (451 aa)). Positions 382–672 (ITLVERLDEG…TLVEDLDRML (291 aa)) constitute a Protein kinase domain. ATP-binding positions include 388 to 396 (LDEGFFGQV) and lysine 417. Aspartate 537 functions as the Proton acceptor in the catalytic mechanism. Residue tyrosine 568 is modified to Phosphotyrosine; by autocatalysis. Over residues 691 to 711 (YSESSEDESESQNSDEEDDDS) the composition is skewed to acidic residues. Residues 691–742 (YSESSEDESESQNSDEEDDDSVFERMRQIDSLSNGNIPFNEEDSSNSDPYVA) are disordered.

The protein belongs to the protein kinase superfamily. Tyr protein kinase family. Fibroblast growth factor receptor subfamily.

The protein localises to the membrane. The catalysed reaction is L-tyrosyl-[protein] + ATP = O-phospho-L-tyrosyl-[protein] + ADP + H(+). Its function is as follows. Receptor for basic fibroblast growth factor. This is Fibroblast growth factor receptor (FGFR) from Halocynthia roretzi (Sea squirt).